The primary structure comprises 183 residues: MKKVHLIQADITAFAVHAIVNSANKSLLGGGGLDYVIHKKAGPLMKEECVRLNQEKGGCPTGQAEVTTAGNLPAKYLIHAVGPRWLDGEHNEPQLLCDAYSNALFKANEIHALTVSFPCISTGVYGFPPQKAAEIAIGTILSMLPQYDHVAEVFFICREDENYLIYKNILSNIDDPNIQILIS.

Positions 1 to 174 (MKKVHLIQAD…IYKNILSNID (174 aa)) constitute a Macro domain.

The protein belongs to the MacroD-type family.

In Acinetobacter sp. (strain ED45-25), this protein is Macro domain-containing protein.